Here is a 2126-residue protein sequence, read N- to C-terminus: Serine/threonine-protein kinase WNK1 (2126 aa).

Disordered regions lie at residues 1–80 (MSDG…FFRR) and 93–202 (LPGL…QQQD). Phosphoserine is present on S17. The segment covering 48 to 64 (RTEEYRRRRHTMDKDSR) has biased composition (basic and acidic residues). T58 bears the Phosphothreonine mark. 2 stretches are compositionally biased toward low complexity: residues 101-111 (PQPSVPAVVPQ) and 127-141 (VASQ…AASP). Phosphoserine occurs at positions 165 and 172. In terms of domain architecture, Protein kinase spans 221–479 (LKFDIEIGRG…IKDLLNHAFF (259 aa)). S231 contacts ATP. Residues F283 and L299 each coordinate chloride. Residues 301–304 (TELM) and K351 contribute to the ATP site. D368 serves as the catalytic Proton acceptor. Chloride-binding residues include L369 and L371. Phosphoserine; by autocatalysis occurs at positions 378 and 382. The tract at residues 488 to 555 (ELAEEDDGEK…VCEGDHKTMA (68 aa)) is autoinhibitory domain. Basic and acidic residues predominate over residues 573–588 (QLVREEQEKRKQEESS). The segment at 573–865 (QLVREEQEKR…SRHEKTSRPK (293 aa)) is disordered. The span at 593-614 (NEQQASVSQAGIQPLSVASTGI) shows a compositional bias: polar residues. Residues 615–626 (PTAPTTSASVST) show a composition bias toward low complexity. The tract at residues 629-639 (EPEEPEADQHQ) is interaction with KLHL3. 3 stretches are compositionally biased toward polar residues: residues 638 to 682 (HQQL…GSQH), 695 to 705 (TVSSIQAQSQP), and 713 to 733 (SMAQ…VLSS). Over residues 734 to 746 (QPVQHPQQQGIQP) the composition is skewed to low complexity. Positions 750–789 (PQQAVQYSLPQAASSSEGTVQPVSQPQVSAGTQSSTQGVS) are enriched in polar residues. Over residues 793–823 (PPEQTPITQSQPTQPVPLVSSVDSAHSDVAS) the composition is skewed to low complexity. A compositionally biased stretch (polar residues) spans 826–836 (SDGNENAPSSS). Over residues 844-865 (TKRHYRKSVRSRSRHEKTSRPK) the composition is skewed to basic residues. The RFXV motif 1 signature appears at 1003–1006 (RFIV). S1007 is subject to Phosphoserine. Disordered stretches follow at residues 1474-1507 (GQVS…LTKT) and 1557-1595 (IPVT…ASSS). The segment covering 1477–1496 (STPGTHASAPASTATGAKPG) has biased composition (low complexity). Positions 1567–1583 (STMSSTAVTEAGSQPQK) are enriched in polar residues. Positions 1604 to 1607 (RFQV) match the RFXV motif 2 motif. Residues 1610-1695 (TMDDAQKERK…TKVGRFQVTT (86 aa)) form a disordered region. Over residues 1613–1629 (DAQKERKNRSEDTKSVH) the composition is skewed to basic and acidic residues. A compositionally biased stretch (low complexity) spans 1632–1650 (SSTSESSVLSSSSPESTLV). 2 short sequence motifs (RFXV motif) span residues 1690–1693 (RFQV) and 1702–1705 (RFSV). The span at 1709–1719 (EDKVTELKKEG) shows a compositional bias: basic and acidic residues. Disordered stretches follow at residues 1709–1783 (EDKV…LCSK), 1856–1940 (VIIP…NLYS), and 1952–1990 (SLSA…KGTF). Residue S1723 is modified to Phosphoserine. The span at 1738-1747 (PKKEKPELAE) shows a compositional bias: basic and acidic residues. Phosphoserine occurs at positions 1755, 1756, 1771, 1773, 1776, and 1865. The segment covering 1866–1878 (GRRRRPTKSKGSK) has biased composition (basic residues). The segment covering 1879-1889 (SSRSSSLGNKS) has biased composition (low complexity). Residues 1890 to 1940 (PQLSGNLSGQSGTSVLNPQQTLHPPGNTPETGHNQLLQPLKPSPSSDNLYS) show a composition bias toward polar residues. Residues 1957-1981 (GQGTSSTNTVGGTVSSQAAQAQPPA) are compositionally biased toward low complexity. An amphipathic alpha-helix region spans residues 1985–2005 (SRKGTFTDDLHKLVDNWARDA). S2014 and S2030 each carry phosphoserine. Residues 2076–2097 (PFGTQWSGTGGPAPQPLGQFQP) are disordered. Phosphoserine is present on residues S2114 and S2116.

Belongs to the protein kinase superfamily. Ser/Thr protein kinase family. WNK subfamily. In terms of assembly, interacts with WNK3. Interacts with WNK4; inhibiting the activity of WNK4. Interacts with SGK1; promoting its activation. Associates with the mTORC2 complex. Interacts with UVRAG. Interacts (via amphipathic alpha-helix region) with EMC2; promoting the ER membrane protein complex assembly. As to quaternary structure, interacts with isoform 1; inhibiting isoform 1 activity. Mg(2+) is required as a cofactor. Autophosphorylated at Ser-378 and Ser-382, promoting its activity. Autophosphorylation at Ser-382 is inhibited by intracellular calcium. Phosphorylation at Thr-58 increases ability to activate SGK1. In terms of processing, ubiquitinated by the BCR(KLHL3) complex, leading to its degradation. Also ubiquitinated by the BCR(KLHL2) complex. Post-translationally, may be O-glycosylated.

It localises to the cytoplasm. Its subcellular location is the nucleus. The protein localises to the cytoskeleton. It is found in the spindle. The catalysed reaction is L-seryl-[protein] + ATP = O-phospho-L-seryl-[protein] + ADP + H(+). It carries out the reaction L-threonyl-[protein] + ATP = O-phospho-L-threonyl-[protein] + ADP + H(+). With respect to regulation, activated in response to hyperosmotic stress: cell shrinkage promotes formation of a membraneless compartment that concentrates WNK1 with its substrates, OXSR1/OSR1 and STK39/SPAK. Activation requires autophosphorylation of Ser-382 and, to a lower extent, Ser-378. Autophosphorylation and subsequent activation is inhibited by increases in intracellular ionic strength: Cl(-) potently inhibits WNK1 kinase activity via direct binding. Also inhibited by K(+) ions. Inhibited by Compound 12 ((5-Chloro-2-(2-((methyl-d3)amino)thiazol-4-yl)- pyridin-4-yl)(4-(4-chlorobenzyl)piperazin-1-yl)methanone). In terms of biological role, serine/threonine-protein kinase component of the WNK1-SPAK/OSR1 kinase cascade, which acts as a key regulator of blood pressure and regulatory volume increase by promoting ion influx. WNK1 mediates regulatory volume increase in response to hyperosmotic stress by acting as a molecular crowding sensor, which senses cell shrinkage and mediates formation of a membraneless compartment by undergoing liquid-liquid phase separation. The membraneless compartment concentrates WNK1 with its substrates, OXSR1/OSR1 and STK39/SPAK, promoting WNK1-dependent phosphorylation and activation of downstream kinases OXSR1/OSR1 and STK39/SPAK. Following activation, OXSR1/OSR1 and STK39/SPAK catalyze phosphorylation of ion cotransporters SLC12A1/NKCC2, SLC12A2/NKCC1, SLC12A5/KCC2 and SLC12A6/KCC3, regulating their activity. Phosphorylation of Na-K-Cl cotransporters SLC12A2/NKCC1 and SLC12A2/NKCC1 promote their activation and ion influx; simultaneously, phosphorylation of K-Cl cotransporters SLC12A5/KCC2 and SLC12A6/KCC3 inhibit their activity, blocking ion efflux. Also acts as a regulator of angiogenesis in endothelial cells. Also acts independently of the WNK1-SPAK/OSR1 kinase cascade by catalyzing phosphorylation of other substrates, such as SYT2, PCF11 and NEDD4L. Mediates phosphorylation of SYT2, regulating SYT2 association with phospholipids and membrane-binding. Regulates mRNA export in the nucleus by mediating phosphorylation of PCF11, thereby decreasing the association between PCF11 and POLR2A/RNA polymerase II and promoting mRNA export to the cytoplasm. Acts as a negative regulator of autophagy. Required for the abscission step during mitosis, independently of the WNK1-SPAK/OSR1 kinase cascade. WNK1 may also play a role in actin cytoskeletal reorganization. Also acts as a scaffold protein independently of its protein kinase activity: negatively regulates cell membrane localization of various transporters and channels, such as SLC4A4, SLC26A6, SLC26A9, TRPV4 and CFTR. Involved in the regulation of epithelial Na(+) channel (ENaC) by promoting activation of SGK1 in a kinase-independent manner. Probably activates SGK1 by acting as a scaffold protein that promotes the recruitment of SGK1 to the mTORC2 complex in response to chloride, leading to mTORC2-dependent phosphorylation and activation of SGK1. Acts as an assembly factor for the ER membrane protein complex independently of its protein kinase activity: associates with EMC2 in the cytoplasm via its amphipathic alpha-helix, and prevents EMC2 ubiquitination and subsequent degradation, thereby promoting EMC2 stabilization. Functionally, kinase-defective isoform specifically expressed in kidney, which acts as a dominant-negative regulator of the longer isoform 1. Does not directly inhibit WNK4 and has no direct effect on sodium and chloride ion transport. Down-regulates sodium-chloride cotransporter activity indirectly by inhibiting isoform 1, it associates with isoform 1 and attenuates its kinase activity. In kidney, may play an important role regulating sodium and potassium balance. Kinase-defective isoform produced by alternative promoter usage and alternative splicing. The chain is Serine/threonine-protein kinase WNK1 from Rattus norvegicus (Rat).